The primary structure comprises 453 residues: tRNA modification GTPase MnmE (453 aa).

(6S)-5-formyl-5,6,7,8-tetrahydrofolate is bound by residues Arg-23, Glu-80, and Lys-120. Residues 216 to 375 (GSKIVIIGKP…LIKYLKDLNC (160 aa)) form the TrmE-type G domain. Asn-226 contacts K(+). GTP contacts are provided by residues 226–231 (NSGKSS), 245–251 (TSIEGTT), and 270–273 (DTAG). Ser-230 serves as a coordination point for Mg(2+). Thr-245, Ile-247, and Thr-250 together coordinate K(+). Residue Thr-251 participates in Mg(2+) binding. Lys-453 serves as a coordination point for (6S)-5-formyl-5,6,7,8-tetrahydrofolate.

Belongs to the TRAFAC class TrmE-Era-EngA-EngB-Septin-like GTPase superfamily. TrmE GTPase family. In terms of assembly, homodimer. Heterotetramer of two MnmE and two MnmG subunits. It depends on K(+) as a cofactor.

Its subcellular location is the cytoplasm. Exhibits a very high intrinsic GTPase hydrolysis rate. Involved in the addition of a carboxymethylaminomethyl (cmnm) group at the wobble position (U34) of certain tRNAs, forming tRNA-cmnm(5)s(2)U34. This Wigglesworthia glossinidia brevipalpis protein is tRNA modification GTPase MnmE.